Reading from the N-terminus, the 369-residue chain is CASP-like protein 4U1 (369 aa).

Residues 1–162 (MASTPRTPAP…RAETKLPLSS (162 aa)) form a disordered region. At 1–222 (MASTPRTPAP…AVAAVAERRE (222 aa)) the chain is on the cytoplasmic side. The segment covering 7-23 (TPAPERSPPPVPTPPPP) has biased composition (pro residues). A compositionally biased stretch (basic and acidic residues) spans 36-51 (SPREEASFSSDGREGA). Composition is skewed to low complexity over residues 87-96 (ANKAAAATAE) and 114-127 (SSQTSPATTNSPTP). Residues 223–243 (LLLALRLATAVLSLAAFSVIA) traverse the membrane as a helical segment. Topologically, residues 244–262 (SARTSGWAGDYYARHLQYR) are extracellular. Residues 263 to 283 (YAVAVNVIVFAYSVAQSLGKI) traverse the membrane as a helical segment. Topologically, residues 284 to 300 (RHLVSPRFTFRTMSSYY) are cytoplasmic. The chain crosses the membrane as a helical span at residues 301–321 (CSLFLDQVLAYLLMSASSAAA). The Extracellular portion of the chain corresponds to 322–339 (SRNDLWVSRFGTDAFVRK). A helical membrane pass occupies residues 340 to 360 (ITGALWLSFVAFLVLALNAVI). Residues 361-369 (SXANLFSMV) lie on the Cytoplasmic side of the membrane.

It belongs to the Casparian strip membrane proteins (CASP) family. Homodimer and heterodimers.

It localises to the cell membrane. In Zea mays (Maize), this protein is CASP-like protein 4U1.